A 165-amino-acid polypeptide reads, in one-letter code: uncharacterized protein (165 aa).

Helical transmembrane passes span Gly30 to Gly50, Gly65 to Leu85, Ser86 to Gly106, Phe108 to Gly128, and Trp131 to Gly151.

It to E.coli YcdZ.

Its subcellular location is the cell membrane. This is an uncharacterized protein from Escherichia coli (strain K12).